The chain runs to 89 residues: MSQQKGNKSRINVEIYGQQYSVVGDESTSHIRMVAAIVDDKMRELNAKNPSLDTSRLAVLTAVNVIHDYIKLKEEHEKLKESMTQKGME.

Belongs to the ZapA family. Type 2 subfamily. Homodimer. Interacts with FtsZ.

Its subcellular location is the cytoplasm. Functionally, activator of cell division through the inhibition of FtsZ GTPase activity, therefore promoting FtsZ assembly into bundles of protofilaments necessary for the formation of the division Z ring. It is recruited early at mid-cell but it is not essential for cell division. This is Cell division protein ZapA from Bacillus mycoides (strain KBAB4) (Bacillus weihenstephanensis).